Reading from the N-terminus, the 438-residue chain is Phospholipase D Y (438 aa).

Residues 1 to 19 form the signal peptide; it reads MIINRLFIIIVLFFVNVNS. N-linked (GlcNAc...) asparagine glycosylation occurs at Asn50. One can recognise a PLD phosphodiesterase 1 domain in the interval 145–172; sequence GSGVLHTKLIIIDESSAYVGSANADWSS. Catalysis depends on residues His150, Lys152, and Asp157. Asn223, Asn336, and Asn394 each carry an N-linked (GlcNAc...) asparagine glycan. The PLD phosphodiesterase 2 domain maps to 373 to 399; the sequence is YTRVNHAKFMVTEKQSYVGTSNWSQDY.

The protein belongs to the phospholipase D family.

The catalysed reaction is a 1,2-diacyl-sn-glycero-3-phosphocholine + H2O = a 1,2-diacyl-sn-glycero-3-phosphate + choline + H(+). Its activity is regulated as follows. Inhibited by butan-1-ol. Hydrolyzes membrane phospholipids, such as PtdCho (phosphatidylcholine), producing the free headgroup and PtdOH (phosphatidic acid; signaling molecule on its own). This chain is Phospholipase D Y (pldY), found in Dictyostelium discoideum (Social amoeba).